Reading from the N-terminus, the 246-residue chain is Probable septum site-determining protein MinC (246 aa).

The segment at 116–140 (AAVSPPPPPPARAEPAPPAARPAPG) is disordered. Over residues 119–136 (SPPPPPPARAEPAPPAAR) the composition is skewed to pro residues.

The protein belongs to the MinC family. In terms of assembly, interacts with MinD and FtsZ.

Cell division inhibitor that blocks the formation of polar Z ring septums. Rapidly oscillates between the poles of the cell to destabilize FtsZ filaments that have formed before they mature into polar Z rings. Prevents FtsZ polymerization. The protein is Probable septum site-determining protein MinC of Xanthomonas oryzae pv. oryzae (strain MAFF 311018).